Reading from the N-terminus, the 93-residue chain is Peptide YY-like (93 aa).

Positions 1-27 (MVSPRVRLAALALSVCAILCLGMHASA) are cleaved as a signal peptide. Tyrosine amide is present on Tyr-63. The propeptide at 65–93 (KRALTPENWIYRDPAEERVTYGLDDYAMW) is C-terminal extension.

It belongs to the NPY family. As to expression, gut and medial reticulospinal neuron system in the brainstem.

It is found in the secreted. In terms of biological role, gastrointestinal hormone and neuropeptide. The protein is Peptide YY-like (pyy) of Lampetra fluviatilis (European river lamprey).